The following is a 67-amino-acid chain: Large ribosomal subunit protein bL31c (67 aa).

It belongs to the bacterial ribosomal protein bL31 family. Type A subfamily. Part of the 50S ribosomal subunit.

The protein localises to the plastid. The protein resides in the chloroplast. In terms of biological role, binds the 23S rRNA. This chain is Large ribosomal subunit protein bL31c (rpl31), found in Cyanidioschyzon merolae (strain NIES-3377 / 10D) (Unicellular red alga).